The chain runs to 489 residues: Rhamnulokinase (489 aa).

An ATP-binding site is contributed by 13–17 (ASSGR). A disulfide bridge links cysteine 68 with cysteine 222. Substrate contacts are provided by residues glycine 83 and 236–238 (HDT). Residue aspartate 237 is the Proton acceptor of the active site. An ATP-binding site is contributed by threonine 259. Asparagine 296 contacts substrate. Glutamine 304 is an ATP binding site. A disulfide bond links cysteine 353 and cysteine 370. Glycine 402 is a binding site for ATP. The cysteines at positions 413 and 417 are disulfide-linked.

Belongs to the rhamnulokinase family. In terms of assembly, monomer. Mg(2+) is required as a cofactor.

The catalysed reaction is L-rhamnulose + ATP = L-rhamnulose 1-phosphate + ADP + H(+). The protein operates within carbohydrate degradation; L-rhamnose degradation; glycerone phosphate from L-rhamnose: step 2/3. Functionally, involved in the catabolism of L-rhamnose (6-deoxy-L-mannose). Catalyzes the transfer of the gamma-phosphate group from ATP to the 1-hydroxyl group of L-rhamnulose to yield L-rhamnulose 1-phosphate. The sequence is that of Rhamnulokinase from Escherichia coli O157:H7.